The chain runs to 422 residues: Tyrosine--tRNA ligase (422 aa).

Residue tyrosine 36 coordinates L-tyrosine. The 'HIGH' region motif lies at 41 to 50 (PTAGSLHIGH). Positions 174 and 178 each coordinate L-tyrosine. The 'KMSKS' region signature appears at 234-238 (KFGKT). Position 237 (lysine 237) interacts with ATP. Positions 356 to 420 (TDLVTLLVES…GKKQYRLVTW (65 aa)) constitute an S4 RNA-binding domain.

Belongs to the class-I aminoacyl-tRNA synthetase family. TyrS type 1 subfamily. Homodimer.

It localises to the cytoplasm. It carries out the reaction tRNA(Tyr) + L-tyrosine + ATP = L-tyrosyl-tRNA(Tyr) + AMP + diphosphate + H(+). Catalyzes the attachment of tyrosine to tRNA(Tyr) in a two-step reaction: tyrosine is first activated by ATP to form Tyr-AMP and then transferred to the acceptor end of tRNA(Tyr). This Aeromonas hydrophila subsp. hydrophila (strain ATCC 7966 / DSM 30187 / BCRC 13018 / CCUG 14551 / JCM 1027 / KCTC 2358 / NCIMB 9240 / NCTC 8049) protein is Tyrosine--tRNA ligase.